A 682-amino-acid chain; its full sequence is MLMRLLPLPSLTDGRPLGCCCTCQGSMKGDELKAQGPLPPQPLQGPLKGDKCEQPGLGPEPTAPQQHTEEEEALIEFHRSYRELFQFFCNNTTIHGAIRLVCSKHNRMKTAFWAVLWLCTFGMMYWQFALLFGEYFSYPVSLNINLNSDKLVFPAVTVCTLNPYRYKEIKEQLRELDRITQQTLFDLYNYNASSTLLAGARSRRSLADTLPYPLQRIPVQPEPRRARSSDPSSVRDNNPRVDRRDWRVGFQLCNQNKSDCFYQTSSSGVDGVREWYRFHYINILAQVADTSPRWEEETLGNFIFACRFNQAPCTQENYSHFHHPIYGNCYTFNNKNDSSLWMASMPGINNGLSLTLRTEQNDYIPLLSTVTGARVTVHGQDEPAFMDDGGFNLRPGVETSISMRKEALDRLGGSYGDCTQDGSDVPVQNLYPSKYTQQVCIHSCFQENMIKQCGCAYIFYPKPKGVEFCDYTNHSAWGYCYYKLQGAFSSDSLGCFNKCRKPCNVTIYKLSAGYSRWPSAASQDWIFQMLSLQNNYTISNKRNGVAKLNIYFKELNYRTNSESPSVTMVTLLSNLGSQWSLWFGSSVLSVVEMAEFMFDLLVITLLMLLRRFRSRYWSPGRGARAAREVACTPPPSLPSRFCAHSAFPTLTAPPPAYATLSACPPLQGLAGASSAACAPREP.

Topologically, residues 1-111 are cytoplasmic; it reads MLMRLLPLPS…CSKHNRMKTA (111 aa). Residues 34-69 are disordered; that stretch reads AQGPLPPQPLQGPLKGDKCEQPGLGPEPTAPQQHTE. Residues 112 to 132 traverse the membrane as a helical segment; sequence FWAVLWLCTFGMMYWQFALLF. At 133-586 the chain is on the extracellular side; that stretch reads GEYFSYPVSL…SQWSLWFGSS (454 aa). 10 cysteine pairs are disulfide-bonded: cysteine 159-cysteine 329, cysteine 253-cysteine 260, cysteine 306-cysteine 313, cysteine 418-cysteine 503, cysteine 440-cysteine 480, cysteine 440-cysteine 499, cysteine 444-cysteine 495, cysteine 453-cysteine 480, cysteine 453-cysteine 503, and cysteine 455-cysteine 469. Asparagine 191 carries an N-linked (GlcNAc...) asparagine glycan. The gating release of inhibition by proteolysis (GRIP); protease-sensitive region that is responsible for the proteolytic activation of the channel stretch occupies residues 201 to 267; the sequence is RSRRSLADTL…SDCFYQTSSS (67 aa). The segment at 221-240 is disordered; it reads PEPRRARSSDPSSVRDNNPR. An N-linked (GlcNAc...) asparagine glycan is attached at asparagine 504. The helical transmembrane segment at 587 to 607 threads the bilayer; it reads VLSVVEMAEFMFDLLVITLLM. Over 608–682 the chain is Cytoplasmic; the sequence is LLRRFRSRYW…SSAACAPREP (75 aa). The short motif at 653 to 657 is the PY motif; recruits WW domain-containing proteins and is thereby required for ubiquitination and inhibition of the channel by NEDD4 and NEDD4L element; the sequence is PPPAY.

The protein belongs to the amiloride-sensitive sodium channel (TC 1.A.6) family. SCNN1A subfamily. In terms of assembly, heterotrimer; containing an alpha/SCNN1A, a beta/SCNN1B and a gamma/SCNN1G subunit. Interacts with WWP1 (via WW domains). Interacts with WWP2 (via WW domains); inhibits the channel. Interacts with BPIFA1; the interaction is indirect via SCNN1B and inhibits the proteolytic processing of SCNN1A and SCNN1G and the activation of ENaC. Interacts with the full-length immature form of PCSK9 (pro-PCSK9). Post-translationally, ubiquitinated. Can be ubiquitinated at multiple sites and undergo monoubiquitination and polyubiquitination. Ubiquitination by NEDD4 or NEDD4L inhibits the ENaC channel through endocytosis, intracellular retention and degradation of its individual subunits. N-glycosylated. In terms of processing, ENaC is activated through the proteolytic maturation of its subunits. Furin cleaves the SCNN1A subunit, which results in a stepwise increase in the open probability of the channel due to the release of an inhibitory tract. BPIFA1, which is recruited by the SCNN1B subunit, prevents the proteolytic activation of ENaC.

Its subcellular location is the apical cell membrane. The protein localises to the cell projection. It is found in the cilium. It localises to the cytoplasmic granule. The protein resides in the cytoplasm. Its subcellular location is the cytoplasmic vesicle. The protein localises to the secretory vesicle. It is found in the acrosome. It localises to the flagellum. It carries out the reaction Na(+)(in) = Na(+)(out). With respect to regulation, originally identified and characterized by its inhibition by the diuretic drug amiloride. This is one of the three pore-forming subunits of the heterotrimeric epithelial sodium channel (ENaC), a critical regulator of sodium balance and fluid homeostasis. ENaC operates in epithelial tissues, where it mediates the electrodiffusion of sodium ions from extracellular fluid through the apical membrane of cells, with water following osmotically. It plays a key role in maintaining sodium homeostasis through electrogenic sodium reabsorption in the kidneys. Additionally, ENaC is essential for airway surface liquid homeostasis, which is crucial for proper mucus clearance. This chain is Epithelial sodium channel subunit alpha, found in Cavia porcellus (Guinea pig).